We begin with the raw amino-acid sequence, 138 residues long: Type II secretion system protein I (138 aa).

A propeptide spans 1–6 (MKHQRG) (leader sequence). Position 7 is an N-methyltyrosine (Tyr7). Residues 7–29 (YSLIEVIVAFALLALALTLLLGS) traverse the membrane as a helical segment.

This sequence belongs to the GSP I family. As to quaternary structure, type II secretion is composed of four main components: the outer membrane complex, the inner membrane complex, the cytoplasmic secretion ATPase and the periplasm-spanning pseudopilus. Interacts with core component XpsG. In terms of processing, cleaved by prepilin peptidase. Methylated by prepilin peptidase at the amino group of the N-terminal tyrosine once the leader sequence is cleaved by prepilin peptidase.

Its subcellular location is the cell inner membrane. Functionally, component of the type II secretion system required for the energy-dependent secretion of extracellular factors such as proteases and toxins from the periplasm. Part of the pseudopilus tip complex that is critical for the recognition and binding of secretion substrates. In Xanthomonas campestris pv. campestris (strain ATCC 33913 / DSM 3586 / NCPPB 528 / LMG 568 / P 25), this protein is Type II secretion system protein I (xpsI).